The chain runs to 274 residues: 4-hydroxy-3-methylbut-2-enyl diphosphate reductase (274 aa).

A [4Fe-4S] cluster-binding site is contributed by C12. (2E)-4-hydroxy-3-methylbut-2-enyl diphosphate contacts are provided by H36 and H70. Dimethylallyl diphosphate contacts are provided by H36 and H70. Residues H36 and H70 each contribute to the isopentenyl diphosphate site. C92 provides a ligand contact to [4Fe-4S] cluster. Residue H120 coordinates (2E)-4-hydroxy-3-methylbut-2-enyl diphosphate. H120 is a binding site for dimethylallyl diphosphate. H120 contributes to the isopentenyl diphosphate binding site. Residue E122 is the Proton donor of the active site. T158 is a binding site for (2E)-4-hydroxy-3-methylbut-2-enyl diphosphate. A [4Fe-4S] cluster-binding site is contributed by C186. Residues S214, S215, N216, and S258 each coordinate (2E)-4-hydroxy-3-methylbut-2-enyl diphosphate. Dimethylallyl diphosphate-binding residues include S214, S215, N216, and S258. 4 residues coordinate isopentenyl diphosphate: S214, S215, N216, and S258.

This sequence belongs to the IspH family. It depends on [4Fe-4S] cluster as a cofactor.

The catalysed reaction is isopentenyl diphosphate + 2 oxidized [2Fe-2S]-[ferredoxin] + H2O = (2E)-4-hydroxy-3-methylbut-2-enyl diphosphate + 2 reduced [2Fe-2S]-[ferredoxin] + 2 H(+). The enzyme catalyses dimethylallyl diphosphate + 2 oxidized [2Fe-2S]-[ferredoxin] + H2O = (2E)-4-hydroxy-3-methylbut-2-enyl diphosphate + 2 reduced [2Fe-2S]-[ferredoxin] + 2 H(+). It functions in the pathway isoprenoid biosynthesis; dimethylallyl diphosphate biosynthesis; dimethylallyl diphosphate from (2E)-4-hydroxy-3-methylbutenyl diphosphate: step 1/1. It participates in isoprenoid biosynthesis; isopentenyl diphosphate biosynthesis via DXP pathway; isopentenyl diphosphate from 1-deoxy-D-xylulose 5-phosphate: step 6/6. Functionally, catalyzes the conversion of 1-hydroxy-2-methyl-2-(E)-butenyl 4-diphosphate (HMBPP) into a mixture of isopentenyl diphosphate (IPP) and dimethylallyl diphosphate (DMAPP). Acts in the terminal step of the DOXP/MEP pathway for isoprenoid precursor biosynthesis. This chain is 4-hydroxy-3-methylbut-2-enyl diphosphate reductase, found in Helicobacter pylori (strain Shi470).